The following is a 195-amino-acid chain: Imidazoleglycerol-phosphate dehydratase (195 aa).

It belongs to the imidazoleglycerol-phosphate dehydratase family.

It is found in the cytoplasm. The enzyme catalyses D-erythro-1-(imidazol-4-yl)glycerol 3-phosphate = 3-(imidazol-4-yl)-2-oxopropyl phosphate + H2O. The protein operates within amino-acid biosynthesis; L-histidine biosynthesis; L-histidine from 5-phospho-alpha-D-ribose 1-diphosphate: step 6/9. This is Imidazoleglycerol-phosphate dehydratase from Pelotomaculum thermopropionicum (strain DSM 13744 / JCM 10971 / SI).